The primary structure comprises 715 residues: Fatty acid oxidation complex subunit alpha (715 aa).

An enoyl-CoA hydratase/isomerase region spans residues 1-190; that stretch reads MIYQGKAITV…KVGAVDAVVA (190 aa). Substrate is bound at residue Asp-297. Positions 312–715 are 3-hydroxyacyl-CoA dehydrogenase; it reads HDAKQAAVLG…MAKNGQRFFN (404 aa). Residues Met-325, Asp-344, 401-403, Lys-408, and Ser-430 contribute to the NAD(+) site; that span reads VVE. The active-site For 3-hydroxyacyl-CoA dehydrogenase activity is His-451. Residue Asn-454 participates in NAD(+) binding. Residues Asn-501 and Tyr-660 each contribute to the substrate site.

It in the N-terminal section; belongs to the enoyl-CoA hydratase/isomerase family. In the C-terminal section; belongs to the 3-hydroxyacyl-CoA dehydrogenase family. As to quaternary structure, heterotetramer of two alpha chains (FadB) and two beta chains (FadA).

The enzyme catalyses a (3S)-3-hydroxyacyl-CoA + NAD(+) = a 3-oxoacyl-CoA + NADH + H(+). It catalyses the reaction a (3S)-3-hydroxyacyl-CoA = a (2E)-enoyl-CoA + H2O. The catalysed reaction is a 4-saturated-(3S)-3-hydroxyacyl-CoA = a (3E)-enoyl-CoA + H2O. It carries out the reaction (3S)-3-hydroxybutanoyl-CoA = (3R)-3-hydroxybutanoyl-CoA. The enzyme catalyses a (3Z)-enoyl-CoA = a 4-saturated (2E)-enoyl-CoA. It catalyses the reaction a (3E)-enoyl-CoA = a 4-saturated (2E)-enoyl-CoA. It participates in lipid metabolism; fatty acid beta-oxidation. Its function is as follows. Involved in the aerobic and anaerobic degradation of long-chain fatty acids via beta-oxidation cycle. Catalyzes the formation of 3-oxoacyl-CoA from enoyl-CoA via L-3-hydroxyacyl-CoA. It can also use D-3-hydroxyacyl-CoA and cis-3-enoyl-CoA as substrate. The chain is Fatty acid oxidation complex subunit alpha from Ectopseudomonas oleovorans (Pseudomonas oleovorans).